A 235-amino-acid chain; its full sequence is Probable transcriptional regulatory protein MPN_478 (235 aa).

This sequence belongs to the TACO1 family.

The protein resides in the cytoplasm. The polypeptide is Probable transcriptional regulatory protein MPN_478 (Mycoplasma pneumoniae (strain ATCC 29342 / M129 / Subtype 1) (Mycoplasmoides pneumoniae)).